A 238-amino-acid polypeptide reads, in one-letter code: MSNGIFIVGTDTDIGKTFVTGGILYLLRKNGVNASYFKAALSGAIKVNERLIPGDTKFVSDLSGLNEEYSFLTPYVFETAVSPHLASKIENIPINLEVIKSSYLKVKEKYDYIVAEGSGGIVCPMVHNEKSTILLEDIIKLLDLDTLLVASAGLGSINHTVLTVKYIENAGLNIKGIIVNGYDENNICHRDNVKMIKKLTSKDIIALIPRIKDNNNHKEIKKVFDDLDYKKIKKCIGA.

13–18 provides a ligand contact to ATP; the sequence is DIGKTF. Thr17 serves as a coordination point for Mg(2+). Lys38 is an active-site residue. A substrate-binding site is contributed by Ser42. Residues Asp55, 116–119, 209–211, and Asn216 each bind ATP; these read EGSG and PRI. Residues Asp55 and Glu116 each coordinate Mg(2+).

This sequence belongs to the dethiobiotin synthetase family. Homodimer. Mg(2+) is required as a cofactor.

The protein localises to the cytoplasm. The catalysed reaction is (7R,8S)-7,8-diammoniononanoate + CO2 + ATP = (4R,5S)-dethiobiotin + ADP + phosphate + 3 H(+). It functions in the pathway cofactor biosynthesis; biotin biosynthesis; biotin from 7,8-diaminononanoate: step 1/2. In terms of biological role, catalyzes a mechanistically unusual reaction, the ATP-dependent insertion of CO2 between the N7 and N8 nitrogen atoms of 7,8-diaminopelargonic acid (DAPA, also called 7,8-diammoniononanoate) to form a ureido ring. The protein is ATP-dependent dethiobiotin synthetase BioD of Clostridium novyi (strain NT).